A 299-amino-acid polypeptide reads, in one-letter code: Acetylglutamate kinase (299 aa).

Substrate is bound by residues 72–73, R94, and N196; that span reads GG.

The protein belongs to the acetylglutamate kinase family. ArgB subfamily.

Its subcellular location is the cytoplasm. The catalysed reaction is N-acetyl-L-glutamate + ATP = N-acetyl-L-glutamyl 5-phosphate + ADP. It participates in amino-acid biosynthesis; L-arginine biosynthesis; N(2)-acetyl-L-ornithine from L-glutamate: step 2/4. Functionally, catalyzes the ATP-dependent phosphorylation of N-acetyl-L-glutamate. This chain is Acetylglutamate kinase, found in Burkholderia mallei (strain NCTC 10247).